An 862-amino-acid chain; its full sequence is Linoleate 9S-lipoxygenase 1 (862 aa).

In terms of domain architecture, PLAT spans 34-161; it reads NDFGATIIDG…NYRYSRVFFA (128 aa). Residues 164–862 form the Lipoxygenase domain; that stretch reads TYLPSQMPAA…AKGIPNSISI (699 aa). The disordered stretch occupies residues 212-241; it reads GRPILGGNSDHPYPRRGRTERKPNASDPSL. Fe cation-binding residues include His517, His522, His708, Asn712, and Ile862.

It belongs to the lipoxygenase family. As to quaternary structure, monomer. Fe cation serves as cofactor.

The enzyme catalyses (9Z,12Z)-octadecadienoate + O2 = (9S)-hydroperoxy-(10E,12Z)-octadecadienoate. It participates in lipid metabolism; oxylipin biosynthesis. Plant lipoxygenase may be involved in a number of diverse aspects of plant physiology including growth and development, pest resistance, and senescence or responses to wounding. It catalyzes the hydroperoxidation of lipids containing a cis,cis-1,4-pentadiene structure. This Hordeum vulgare (Barley) protein is Linoleate 9S-lipoxygenase 1 (LOX1.1).